The primary structure comprises 447 residues: Na(+)-translocating NADH-quinone reductase subunit A (447 aa).

Belongs to the NqrA family. Composed of six subunits; NqrA, NqrB, NqrC, NqrD, NqrE and NqrF.

The catalysed reaction is a ubiquinone + n Na(+)(in) + NADH + H(+) = a ubiquinol + n Na(+)(out) + NAD(+). In terms of biological role, NQR complex catalyzes the reduction of ubiquinone-1 to ubiquinol by two successive reactions, coupled with the transport of Na(+) ions from the cytoplasm to the periplasm. NqrA to NqrE are probably involved in the second step, the conversion of ubisemiquinone to ubiquinol. The polypeptide is Na(+)-translocating NADH-quinone reductase subunit A (Photorhabdus laumondii subsp. laumondii (strain DSM 15139 / CIP 105565 / TT01) (Photorhabdus luminescens subsp. laumondii)).